The sequence spans 464 residues: ATP-dependent protease ATPase subunit HslU (464 aa).

ATP-binding positions include Val18, 60 to 65, Asp277, Glu342, and Arg414; that span reads GVGKTE.

It belongs to the ClpX chaperone family. HslU subfamily. In terms of assembly, a double ring-shaped homohexamer of HslV is capped on each side by a ring-shaped HslU homohexamer. The assembly of the HslU/HslV complex is dependent on binding of ATP.

It localises to the cytoplasm. Functionally, ATPase subunit of a proteasome-like degradation complex; this subunit has chaperone activity. The binding of ATP and its subsequent hydrolysis by HslU are essential for unfolding of protein substrates subsequently hydrolyzed by HslV. HslU recognizes the N-terminal part of its protein substrates and unfolds these before they are guided to HslV for hydrolysis. The chain is ATP-dependent protease ATPase subunit HslU from Lactobacillus delbrueckii subsp. bulgaricus (strain ATCC 11842 / DSM 20081 / BCRC 10696 / JCM 1002 / NBRC 13953 / NCIMB 11778 / NCTC 12712 / WDCM 00102 / Lb 14).